Here is a 210-residue protein sequence, read N- to C-terminus: Nucleoside triphosphate pyrophosphatase (210 aa).

The active-site Proton acceptor is the Asp-80.

It belongs to the Maf family. The cofactor is a divalent metal cation.

The protein resides in the cytoplasm. The catalysed reaction is a ribonucleoside 5'-triphosphate + H2O = a ribonucleoside 5'-phosphate + diphosphate + H(+). It carries out the reaction a 2'-deoxyribonucleoside 5'-triphosphate + H2O = a 2'-deoxyribonucleoside 5'-phosphate + diphosphate + H(+). Its function is as follows. Nucleoside triphosphate pyrophosphatase. May have a dual role in cell division arrest and in preventing the incorporation of modified nucleotides into cellular nucleic acids. This chain is Nucleoside triphosphate pyrophosphatase, found in Mycobacterium sp. (strain JLS).